Consider the following 346-residue polypeptide: Biotin synthase (346 aa).

Residues 38-256 (QQVQVSTLLS…IAVARIMMPT (219 aa)) enclose the Radical SAM core domain. Positions 53, 57, and 60 each coordinate [4Fe-4S] cluster. [2Fe-2S] cluster-binding residues include Cys-97, Cys-128, Cys-188, and Arg-260.

The protein belongs to the radical SAM superfamily. Biotin synthase family. Homodimer. [4Fe-4S] cluster serves as cofactor. It depends on [2Fe-2S] cluster as a cofactor.

It catalyses the reaction (4R,5S)-dethiobiotin + (sulfur carrier)-SH + 2 reduced [2Fe-2S]-[ferredoxin] + 2 S-adenosyl-L-methionine = (sulfur carrier)-H + biotin + 2 5'-deoxyadenosine + 2 L-methionine + 2 oxidized [2Fe-2S]-[ferredoxin]. Its pathway is cofactor biosynthesis; biotin biosynthesis; biotin from 7,8-diaminononanoate: step 2/2. Its function is as follows. Catalyzes the conversion of dethiobiotin (DTB) to biotin by the insertion of a sulfur atom into dethiobiotin via a radical-based mechanism. The chain is Biotin synthase from Salmonella choleraesuis (strain SC-B67).